A 245-amino-acid chain; its full sequence is MSSLNVLGVIPARIGSTRLPRKVLREIAGEPMLAWVYRAARASGQLRQVLIATDAEEVMEFARQKGLPAIFTPEDCASGTDRVFVVAQSIDADIYVNIQGDEPMLTPAHFTALLAPFEQPHVQVTTLSVPCSEDEIANPNAVKVVTAADGRALYFSRATIPYDRDAAGFIGYRKHLGLYAYRKAALRRFATLPPSRLEEIERLEQLRLLENGIDIHVAEAPGSTIGVDTEEDLRAVEQLLLERKK.

Belongs to the KdsB family.

Its subcellular location is the cytoplasm. It carries out the reaction 3-deoxy-alpha-D-manno-oct-2-ulosonate + CTP = CMP-3-deoxy-beta-D-manno-octulosonate + diphosphate. The protein operates within nucleotide-sugar biosynthesis; CMP-3-deoxy-D-manno-octulosonate biosynthesis; CMP-3-deoxy-D-manno-octulosonate from 3-deoxy-D-manno-octulosonate and CTP: step 1/1. It participates in bacterial outer membrane biogenesis; lipopolysaccharide biosynthesis. Activates KDO (a required 8-carbon sugar) for incorporation into bacterial lipopolysaccharide in Gram-negative bacteria. The protein is 3-deoxy-manno-octulosonate cytidylyltransferase of Acidobacterium capsulatum (strain ATCC 51196 / DSM 11244 / BCRC 80197 / JCM 7670 / NBRC 15755 / NCIMB 13165 / 161).